An 850-amino-acid chain; its full sequence is Bifunctional levopimaradiene synthase, chloroplastic (850 aa).

Residues 1 to 52 (MALPSSSLSSQIHTGATTQCIPHFHGSLNAGTSAGKRRSLYLRWGKGPSKIV) constitute a chloroplast transit peptide. Residue Lys-250 participates in substrate binding. Positions 383 and 385 each coordinate Mg(2+). A DXDD motif motif is present at residues 383–386 (DIDD). Position 470 (Lys-470) interacts with substrate. 5 residues coordinate Mg(2+): Asp-602, Asp-606, Asn-746, Thr-750, and Glu-754. Residues 602 to 606 (DDLYD) carry the DDXXD motif motif.

Belongs to the terpene synthase family. Tpsd subfamily. It depends on Mg(2+) as a cofactor.

It is found in the plastid. The protein localises to the chloroplast. The catalysed reaction is (2E,6E,10E)-geranylgeranyl diphosphate = (+)-copalyl diphosphate. The enzyme catalyses (+)-copalyl diphosphate = abieta-7,13-diene + diphosphate. It carries out the reaction (+)-copalyl diphosphate = abieta-8(14),12-diene + diphosphate. It catalyses the reaction (+)-copalyl diphosphate = neoabietadiene + diphosphate. Its pathway is terpene metabolism; oleoresin biosynthesis. Its function is as follows. Involved in defensive oleoresin formation in conifers in response to insect attack or other injury. Involved in diterpene (C20) olefins biosynthesis. Bifunctional enzyme that catalyzes two sequential cyclizations of geranylgeranyl diphosphate (GGPP) to levopimaradiene. Levopimaradiene is the major products of the enzyme with abietadiene and neoabietadiene. No activity with farnesyl diphosphate (FPP) as substrate. This is Bifunctional levopimaradiene synthase, chloroplastic from Pinus contorta (Shore pine).